The sequence spans 210 residues: 23.6 kDa heat shock protein, mitochondrial (210 aa).

A mitochondrion-targeting transit peptide spans 1–31 (MASALALKRLLSSSIAPRSRSVLRPAVSSRL). Residues 100–210 (MGASGARRGW…RNDVRQIEIN (111 aa)) enclose the sHSP domain. The interval 145–165 (GEGKNEEDGGEEGESGNRRFT) is disordered.

Belongs to the small heat shock protein (HSP20) family. May form oligomeric structures.

The protein resides in the mitochondrion. The polypeptide is 23.6 kDa heat shock protein, mitochondrial (HSP23.6) (Arabidopsis thaliana (Mouse-ear cress)).